A 352-amino-acid chain; its full sequence is MLDRLSALEDRYEKLNDLLADPAIIKDTNQLREVSKEQSQLAPTVEVYRVYRDKMEAYQEARHMLTDPEMRDLAKEEVAVLEPEIKDLETKLKALLLPKDPNDDKNVIVEIRGAAGGDEAALFAGDLFKMYSKFAEKQNWKIEIIDASYTELGGYKEIIFIVKGSGAYSKLKYENGAHRVQRVPSTESGGRIHTSTATVAVLPEAEDVEVEIHDKDVRVDTFTSSGPGGQSVNTTQSAVRVTHVPTGIVASCQDEKSQIKNKEKAMKVLRARVYDKIQREQQAEYDEKRKSAVGTGDRSERIRTYNFAQNRVTDHRIGLTIQKLDRILQGEMDEVIDTLVMEYQARASEAAN.

Glutamine 230 is subject to N5-methylglutamine.

Belongs to the prokaryotic/mitochondrial release factor family. Post-translationally, methylated by PrmC. Methylation increases the termination efficiency of RF1.

Its subcellular location is the cytoplasm. Its function is as follows. Peptide chain release factor 1 directs the termination of translation in response to the peptide chain termination codons UAG and UAA. This chain is Peptide chain release factor 1, found in Exiguobacterium sibiricum (strain DSM 17290 / CCUG 55495 / CIP 109462 / JCM 13490 / 255-15).